A 225-amino-acid polypeptide reads, in one-letter code: Urease accessory protein UreG (225 aa).

25–32 is a GTP binding site; the sequence is GPVGAGKT.

Belongs to the SIMIBI class G3E GTPase family. UreG subfamily. Homodimer. UreD, UreF and UreG form a complex that acts as a GTP-hydrolysis-dependent molecular chaperone, activating the urease apoprotein by helping to assemble the nickel containing metallocenter of UreC. The UreE protein probably delivers the nickel.

The protein resides in the cytoplasm. Facilitates the functional incorporation of the urease nickel metallocenter. This process requires GTP hydrolysis, probably effectuated by UreG. This is Urease accessory protein UreG from Haemophilus influenzae (strain 86-028NP).